Here is a 360-residue protein sequence, read N- to C-terminus: Homeobox protein ceh-60 (360 aa).

The interval 1–82 (MDNLIKQLQM…ENPTFPLEEV (82 aa)) is PBC-A. The PBC domain occupies 1 to 179 (MDNLIKQLQM…ILVLRREIEQ (179 aa)). A PBC-B region spans residues 85-179 (EKDEEWQPLE…ILVLRREIEQ (95 aa)). Residues 180-242 (QGRKRRNFDK…NQRIRTKQQA (63 aa)) constitute a DNA-binding region (homeobox).

It belongs to the TALE/PBX homeobox family. As to quaternary structure, forms a heterodimer with homeobox unc-62. Interacts with pqm-1.

It is found in the nucleus. Functionally, probable transcription regulator which binds to DNA, repressing genes involved in longevity and stress, while activating genes involved in reproduction, such as the vitellogenins. Associates with homeobox unc-62 to regulate gene expression, including repression of genes involved in innate immunity. Required for intestinal expression of vitellogenin genes. Negatively modulates longevity, probably independently of effects on vitellogenesis. Involved in lipid homeostasis, contributing to the reallocation of intestinal lipids to the germline and to the formation of the cuticle. Associates with transcriptional regulator pqm-1 at the daf-16 associated element within the promoters of stress-responsive genes to regulate expression. The chain is Homeobox protein ceh-60 from Caenorhabditis elegans.